The chain runs to 118 residues: NADH-quinone oxidoreductase subunit A 1 (118 aa).

3 helical membrane-spanning segments follow: residues 1-21 (MLGV…FGLA), 60-80 (FYII…MYPW), and 87-107 (LGIF…VGYI).

Belongs to the complex I subunit 3 family. In terms of assembly, NDH-1 is composed of 14 different subunits. Subunits NuoA, H, J, K, L, M, N constitute the membrane sector of the complex.

The protein localises to the cell inner membrane. It catalyses the reaction a quinone + NADH + 5 H(+)(in) = a quinol + NAD(+) + 4 H(+)(out). Functionally, NDH-1 shuttles electrons from NADH, via FMN and iron-sulfur (Fe-S) centers, to quinones in the respiratory chain. The immediate electron acceptor for the enzyme in this species is believed to be ubiquinone. Couples the redox reaction to proton translocation (for every two electrons transferred, four hydrogen ions are translocated across the cytoplasmic membrane), and thus conserves the redox energy in a proton gradient. The sequence is that of NADH-quinone oxidoreductase subunit A 1 from Geobacter sulfurreducens (strain ATCC 51573 / DSM 12127 / PCA).